The chain runs to 237 residues: Proteasome subunit beta type-1 (237 aa).

The protein belongs to the peptidase T1B family. In terms of assembly, the 26S proteasome consists of a 20S proteasome core and two 19S regulatory subunits. The 20S proteasome core is a barrel-shaped complex made of 28 subunits that are arranged in four stacked rings. The two outer rings are each formed by seven alpha subunits, and the two inner rings are formed by seven beta subunits. The proteolytic activity is exerted by three beta-subunits psmb5, psmb6 and psmb7.

The protein resides in the cytoplasm. The protein localises to the nucleus. Its function is as follows. Non-catalytic component of the 20S core proteasome complex involved in the proteolytic degradation of most intracellular proteins. This complex plays numerous essential roles within the cell by associating with different regulatory particles. Associated with two 19S regulatory particles, forms the 26S proteasome and thus participates in the ATP-dependent degradation of ubiquitinated proteins. The 26S proteasome plays a key role in the maintenance of protein homeostasis by removing misfolded or damaged proteins that could impair cellular functions, and by removing proteins whose functions are no longer required. Associated with the PA200 or PA28, the 20S proteasome mediates ubiquitin-independent protein degradation. This chain is Proteasome subunit beta type-1, found in Danio rerio (Zebrafish).